The primary structure comprises 217 residues: Peptidyl-tRNA hydrolase (217 aa).

Tyr14 provides a ligand contact to tRNA. The active-site Proton acceptor is His19. Positions 64, 66, and 113 each coordinate tRNA. Residues 182-217 form a disordered region; it reads MNRINAPPPKPKREQKRSSDAPDSSSDTNTSNASDG. Residues 202–217 show a composition bias toward low complexity; it reads APDSSSDTNTSNASDG.

Belongs to the PTH family. In terms of assembly, monomer.

It is found in the cytoplasm. It catalyses the reaction an N-acyl-L-alpha-aminoacyl-tRNA + H2O = an N-acyl-L-amino acid + a tRNA + H(+). Functionally, hydrolyzes ribosome-free peptidyl-tRNAs (with 1 or more amino acids incorporated), which drop off the ribosome during protein synthesis, or as a result of ribosome stalling. Catalyzes the release of premature peptidyl moieties from peptidyl-tRNA molecules trapped in stalled 50S ribosomal subunits, and thus maintains levels of free tRNAs and 50S ribosomes. This chain is Peptidyl-tRNA hydrolase, found in Roseiflexus sp. (strain RS-1).